The following is a 304-amino-acid chain: HPr kinase/phosphorylase (304 aa).

Residues H136 and K157 contribute to the active site. 151-158 serves as a coordination point for ATP; sequence GESGIGKS. S158 is a binding site for Mg(2+). D175 serves as the catalytic Proton acceptor; for phosphorylation activity. Proton donor; for dephosphorylation activity. The interval 198 to 207 is important for the catalytic mechanism of both phosphorylation and dephosphorylation; sequence LEVRGIGIID. Position 199 (E199) interacts with Mg(2+). The active site involves R240. The important for the catalytic mechanism of dephosphorylation stretch occupies residues 261–266; it reads PVRPGR.

Belongs to the HPrK/P family. Homohexamer. It depends on Mg(2+) as a cofactor.

The enzyme catalyses [HPr protein]-L-serine + ATP = [HPr protein]-O-phospho-L-serine + ADP + H(+). It carries out the reaction [HPr protein]-O-phospho-L-serine + phosphate + H(+) = [HPr protein]-L-serine + diphosphate. Catalyzes the ATP- as well as the pyrophosphate-dependent phosphorylation of a specific serine residue in HPr, a phosphocarrier protein of the phosphoenolpyruvate-dependent sugar phosphotransferase system (PTS). HprK/P also catalyzes the pyrophosphate-producing, inorganic phosphate-dependent dephosphorylation (phosphorolysis) of seryl-phosphorylated HPr (P-Ser-HPr). The two antagonistic activities of HprK/P are regulated by several intracellular metabolites, which change their concentration in response to the absence or presence of rapidly metabolisable carbon sources (glucose, fructose, etc.) in the growth medium. Therefore, by controlling the phosphorylation state of HPr, HPrK/P is a sensor enzyme that plays a major role in the regulation of carbon metabolism and sugar transport: it mediates carbon catabolite repression (CCR), and regulates PTS-catalyzed carbohydrate uptake and inducer exclusion. The protein is HPr kinase/phosphorylase of Clostridium botulinum (strain Alaska E43 / Type E3).